A 151-amino-acid polypeptide reads, in one-letter code: Chaperonin GroEL (151 aa).

Residue 41–45 (DGTTT) coordinates ATP.

Belongs to the chaperonin (HSP60) family. In terms of assembly, forms a cylinder of 14 subunits composed of two heptameric rings stacked back-to-back. Interacts with the co-chaperonin GroES.

It localises to the cytoplasm. It catalyses the reaction ATP + H2O + a folded polypeptide = ADP + phosphate + an unfolded polypeptide.. Together with its co-chaperonin GroES, plays an essential role in assisting protein folding. The GroEL-GroES system forms a nano-cage that allows encapsulation of the non-native substrate proteins and provides a physical environment optimized to promote and accelerate protein folding. This is Chaperonin GroEL from Mycobacteroides chelonae (Mycobacterium chelonae).